The chain runs to 250 residues: 6-phosphogluconate dehydrogenase, decarboxylating (250 aa).

Positions 29 and 56 each coordinate substrate. Lys77 is subject to N6-acetyllysine. Residues Arg214 and His220 each coordinate substrate. 245 to 248 (SSSY) contributes to the NADP(+) binding site.

The protein belongs to the 6-phosphogluconate dehydrogenase family. Homodimer.

Its subcellular location is the cytoplasm. It carries out the reaction 6-phospho-D-gluconate + NADP(+) = D-ribulose 5-phosphate + CO2 + NADPH. It participates in carbohydrate degradation; pentose phosphate pathway; D-ribulose 5-phosphate from D-glucose 6-phosphate (oxidative stage): step 3/3. In terms of biological role, catalyzes the oxidative decarboxylation of 6-phosphogluconate to ribulose 5-phosphate and CO(2), with concomitant reduction of NADP to NADPH. This Sus scrofa (Pig) protein is 6-phosphogluconate dehydrogenase, decarboxylating (PGD).